A 294-amino-acid polypeptide reads, in one-letter code: Large ribosomal subunit protein uL18 (294 aa).

The disordered stretch occupies residues 247 to 275 (RADPSPSAKKAAKPSKRHTAKRLTYDERK). Residues 256-267 (KAAKPSKRHTAK) are compositionally biased toward basic residues.

This sequence belongs to the universal ribosomal protein uL18 family. As to quaternary structure, component of the large ribosomal subunit (LSU).

It localises to the cytoplasm. The protein localises to the nucleus. Functionally, component of the ribosome, a large ribonucleoprotein complex responsible for the synthesis of proteins in the cell. The small ribosomal subunit (SSU) binds messenger RNAs (mRNAs) and translates the encoded message by selecting cognate aminoacyl-transfer RNA (tRNA) molecules. The large subunit (LSU) contains the ribosomal catalytic site termed the peptidyl transferase center (PTC), which catalyzes the formation of peptide bonds, thereby polymerizing the amino acids delivered by tRNAs into a polypeptide chain. The nascent polypeptides leave the ribosome through a tunnel in the LSU and interact with protein factors that function in enzymatic processing, targeting, and the membrane insertion of nascent chains at the exit of the ribosomal tunnel. This chain is Large ribosomal subunit protein uL18 (rpl-5), found in Caenorhabditis briggsae.